Here is a 227-residue protein sequence, read N- to C-terminus: GTP:AMP phosphotransferase AK3, mitochondrial (227 aa).

5 residues coordinate GTP: Gly-17, Gly-19, Lys-20, Gly-21, and Thr-22. Lys-20 is subject to N6-succinyllysine. At Lys-29 the chain carries N6-acetyllysine; alternate. N6-succinyllysine; alternate is present on Lys-29. Position 34 is an N6-acetyllysine (Lys-34). A Phosphoserine modification is found at Ser-37. The tract at residues 37–66 (SSGDLLRQNMLQGTEIAVLAKSFIDQGKLI) is NMP. Residues Ser-38 and Arg-43 each coordinate AMP. Lys-57 is modified (N6-succinyllysine). N6-acetyllysine; alternate occurs at positions 64 and 80. Lys-64 and Lys-80 each carry N6-succinyllysine; alternate. Lys-64 is an AMP binding site. AMP contacts are provided by Gly-91, Arg-94, and Gln-98. The tract at residues 127–164 (ARWIHPASGRVYNIEFNPPKTVGIDDLTGEPLIQREDD) is LID. GTP is bound by residues Arg-128, Tyr-138, Asn-139, Arg-161, and Arg-172. N6-acetyllysine; alternate is present on residues Lys-174 and Lys-189. Lys-174 and Lys-189 each carry N6-succinyllysine; alternate. Thr-201 provides a ligand contact to GTP. The residue at position 203 (Lys-203) is an N6-acetyllysine.

This sequence belongs to the adenylate kinase family. AK3 subfamily. As to quaternary structure, monomer.

It is found in the mitochondrion matrix. The catalysed reaction is a ribonucleoside 5'-triphosphate + AMP = a ribonucleoside 5'-diphosphate + ADP. It carries out the reaction GTP + AMP = GDP + ADP. The enzyme catalyses ITP + AMP = IDP + ADP. Mitochondrial adenylate kinase with a specific GTP:AMP phosphotransferase activity. Could also use ITP as phosphate donor. Its physiological function is to recycle GTP into GDP which is necessary for the TCA cycle in the mitochondrial matrix. The chain is GTP:AMP phosphotransferase AK3, mitochondrial from Rattus norvegicus (Rat).